We begin with the raw amino-acid sequence, 318 residues long: NADH-ubiquinone oxidoreductase chain 1 (318 aa).

Helical transmembrane passes span 2–22, 69–89, 102–122, 146–166, 171–191, 222–242, 253–273, and 294–314; these read FLIN…FLTL, FLFT…WAPL, LLFI…SGWA, MTTI…TAFA, HLWL…STLA, LFFM…VILF, EIST…FLWV, and LPLT…LACI.

It belongs to the complex I subunit 1 family.

It localises to the mitochondrion inner membrane. It carries out the reaction a ubiquinone + NADH + 5 H(+)(in) = a ubiquinol + NAD(+) + 4 H(+)(out). Core subunit of the mitochondrial membrane respiratory chain NADH dehydrogenase (Complex I) that is believed to belong to the minimal assembly required for catalysis. Complex I functions in the transfer of electrons from NADH to the respiratory chain. The immediate electron acceptor for the enzyme is believed to be ubiquinone. The sequence is that of NADH-ubiquinone oxidoreductase chain 1 (MT-ND1) from Loxodonta africana (African elephant).